A 476-amino-acid chain; its full sequence is Ribulose bisphosphate carboxylase large chain (476 aa).

Substrate contacts are provided by Asn-124 and Thr-174. The Proton acceptor role is filled by Lys-176. Substrate is bound at residue Lys-178. Positions 202, 204, and 205 each coordinate Mg(2+). Lys-202 carries the N6-carboxylysine modification. His-295 acts as the Proton acceptor in catalysis. Substrate contacts are provided by Arg-296, His-328, and Ser-380.

The protein belongs to the RuBisCO large chain family. Type I subfamily. In terms of assembly, heterohexadecamer of 8 large chains and 8 small chains; disulfide-linked. The disulfide link is formed within the large subunit homodimers. Mg(2+) is required as a cofactor. Post-translationally, the disulfide bond which can form in the large chain dimeric partners within the hexadecamer appears to be associated with oxidative stress and protein turnover.

Its subcellular location is the carboxysome. The catalysed reaction is 2 (2R)-3-phosphoglycerate + 2 H(+) = D-ribulose 1,5-bisphosphate + CO2 + H2O. The enzyme catalyses D-ribulose 1,5-bisphosphate + O2 = 2-phosphoglycolate + (2R)-3-phosphoglycerate + 2 H(+). RuBisCO catalyzes two reactions: the carboxylation of D-ribulose 1,5-bisphosphate, the primary event in carbon dioxide fixation, as well as the oxidative fragmentation of the pentose substrate in the photorespiration process. Both reactions occur simultaneously and in competition at the same active site. The sequence is that of Ribulose bisphosphate carboxylase large chain from Nostoc punctiforme (strain ATCC 29133 / PCC 73102).